The chain runs to 1139 residues: Dual 3',5'-cyclic-AMP and -GMP phosphodiesterase beta (1139 aa).

2 disordered regions span residues M1–K42 and G154–N177. Over M1 to R429 the chain is Cytoplasmic. Over residues E9–V22 the composition is skewed to basic and acidic residues. Polar residues predominate over residues N29–K42. A helical membrane pass occupies residues M430 to W450. Residues S451–Y462 are Extracellular-facing. A helical transmembrane segment spans residues I463–I483. At I484 to Y498 the chain is on the cytoplasmic side. The helical transmembrane segment at V499–L519 threads the bilayer. Topologically, residues E520–E536 are extracellular. N524 carries N-linked (GlcNAc...) asparagine glycosylation. Residues M537–F557 form a helical membrane-spanning segment. Residues P558–N564 are Cytoplasmic-facing. The chain crosses the membrane as a helical span at residues W565 to A585. Over K586–E592 the chain is Extracellular. Residues I593–S613 form a helical membrane-spanning segment. The Cytoplasmic segment spans residues Y614–D1139. In terms of domain architecture, PDEase spans I775 to E1098. The active-site Proton donor is the H847. H847–H851 provides a ligand contact to a nucleoside 3',5'-cyclic phosphate. The a divalent metal cation site is built by H851, H887, D888, and D1000. Residues D888, D1000, and Q1052 each contribute to the a nucleoside 3',5'-cyclic phosphate site.

Belongs to the cyclic nucleotide phosphodiesterase family. The cofactor is a divalent metal cation.

Its subcellular location is the cell membrane. It is found in the endoplasmic reticulum membrane. The catalysed reaction is 3',5'-cyclic GMP + H2O = GMP + H(+). It carries out the reaction 3',5'-cyclic AMP + H2O = AMP + H(+). Its pathway is purine metabolism; 3',5'-cyclic GMP degradation; GMP from 3',5'-cyclic GMP: step 1/1. It participates in purine metabolism; 3',5'-cyclic AMP degradation; AMP from 3',5'-cyclic AMP: step 1/1. Its function is as follows. Plays a role in signal transduction by regulating the intracellular concentration of cyclic nucleotides cAMP and cGMP. Catalyzes the hydrolysis of both cAMP and cGMP to 5'-AMP and 5'-GMP, respectively. By regulating cAMP levels during the asexual blood stage and, thus PKA activation, required for merozoite invasion of erythrocytes and for the parasite development immediately following invasion. This Plasmodium falciparum (isolate 3D7) protein is Dual 3',5'-cyclic-AMP and -GMP phosphodiesterase beta.